The following is a 362-amino-acid chain: Phosphoserine aminotransferase (362 aa).

S9 and R42 together coordinate L-glutamate. Pyridoxal 5'-phosphate is bound by residues G76–R77, W102, T153, D174, and Q197. K198 bears the N6-(pyridoxal phosphate)lysine mark. N239–T240 is a pyridoxal 5'-phosphate binding site.

It belongs to the class-V pyridoxal-phosphate-dependent aminotransferase family. SerC subfamily. In terms of assembly, homodimer. The cofactor is pyridoxal 5'-phosphate.

The protein resides in the cytoplasm. The enzyme catalyses O-phospho-L-serine + 2-oxoglutarate = 3-phosphooxypyruvate + L-glutamate. It carries out the reaction 4-(phosphooxy)-L-threonine + 2-oxoglutarate = (R)-3-hydroxy-2-oxo-4-phosphooxybutanoate + L-glutamate. The protein operates within amino-acid biosynthesis; L-serine biosynthesis; L-serine from 3-phospho-D-glycerate: step 2/3. It functions in the pathway cofactor biosynthesis; pyridoxine 5'-phosphate biosynthesis; pyridoxine 5'-phosphate from D-erythrose 4-phosphate: step 3/5. In terms of biological role, catalyzes the reversible conversion of 3-phosphohydroxypyruvate to phosphoserine and of 3-hydroxy-2-oxo-4-phosphonooxybutanoate to phosphohydroxythreonine. This chain is Phosphoserine aminotransferase, found in Shigella dysenteriae serotype 1 (strain Sd197).